We begin with the raw amino-acid sequence, 186 residues long: Tumor necrosis factor, alpha-induced protein 8-like protein 2 A (186 aa).

The protein belongs to the TNFAIP8 family. TNFAIP8L2 subfamily.

Acts as a negative regulator of innate and adaptive immunity by maintaining immune homeostasis. Negative regulator of Toll-like receptor and T-cell receptor function. Prevents hyperresponsiveness of the immune system and maintains immune homeostasis. Inhibits jun/ap1 and NF-kappa-B activation. Promotes Fas-induced apoptosis. In Danio rerio (Zebrafish), this protein is Tumor necrosis factor, alpha-induced protein 8-like protein 2 A (tnfaip8l2a).